The following is a 159-amino-acid chain: Ribosomal RNA large subunit methyltransferase H (159 aa).

Residues Gly-108 and 127-132 (FGKLTM) each bind S-adenosyl-L-methionine.

This sequence belongs to the RNA methyltransferase RlmH family. As to quaternary structure, homodimer.

Its subcellular location is the cytoplasm. It carries out the reaction pseudouridine(1915) in 23S rRNA + S-adenosyl-L-methionine = N(3)-methylpseudouridine(1915) in 23S rRNA + S-adenosyl-L-homocysteine + H(+). Specifically methylates the pseudouridine at position 1915 (m3Psi1915) in 23S rRNA. This Lactobacillus acidophilus (strain ATCC 700396 / NCK56 / N2 / NCFM) protein is Ribosomal RNA large subunit methyltransferase H.